Consider the following 430-residue polypeptide: Asparagine--tRNA ligase (430 aa).

The protein belongs to the class-II aminoacyl-tRNA synthetase family. As to quaternary structure, homodimer.

Its subcellular location is the cytoplasm. The enzyme catalyses tRNA(Asn) + L-asparagine + ATP = L-asparaginyl-tRNA(Asn) + AMP + diphosphate + H(+). This Shouchella clausii (strain KSM-K16) (Alkalihalobacillus clausii) protein is Asparagine--tRNA ligase.